Reading from the N-terminus, the 588-residue chain is Aspartate--tRNA ligase (588 aa).

Glu-174 contributes to the L-aspartate binding site. The interval 198–201 (QLFK) is aspartate. Residue Arg-220 participates in L-aspartate binding. Residues 220 to 222 (RDE) and Gln-229 each bind ATP. His-448 contributes to the L-aspartate binding site. Glu-482 is a binding site for ATP. Arg-489 serves as a coordination point for L-aspartate. 534–537 (GIDR) serves as a coordination point for ATP.

Belongs to the class-II aminoacyl-tRNA synthetase family. Type 1 subfamily. As to quaternary structure, homodimer.

It localises to the cytoplasm. The enzyme catalyses tRNA(Asp) + L-aspartate + ATP = L-aspartyl-tRNA(Asp) + AMP + diphosphate. Functionally, catalyzes the attachment of L-aspartate to tRNA(Asp) in a two-step reaction: L-aspartate is first activated by ATP to form Asp-AMP and then transferred to the acceptor end of tRNA(Asp). This chain is Aspartate--tRNA ligase, found in Xanthomonas oryzae pv. oryzae (strain MAFF 311018).